The sequence spans 102 residues: Large ribosomal subunit protein bL21 (102 aa).

Belongs to the bacterial ribosomal protein bL21 family. Part of the 50S ribosomal subunit. Contacts protein L20.

Its function is as follows. This protein binds to 23S rRNA in the presence of protein L20. The polypeptide is Large ribosomal subunit protein bL21 (Bifidobacterium longum (strain DJO10A)).